A 121-amino-acid polypeptide reads, in one-letter code: U15-barytoxin-Tl1b (121 aa).

The signal sequence occupies residues 1 to 16; the sequence is MKLFMVLVASFAFAVA. 4 disulfide bridges follow: C54–C72, C65–C78, C69–C119, and C71–C90.

This sequence belongs to the neurotoxin 03 (Tx2) family. 03 subfamily. As to expression, expressed by the venom gland.

It is found in the secreted. Ion channel inhibitor. This Trittame loki (Brush-footed trapdoor spider) protein is U15-barytoxin-Tl1b.